Consider the following 316-residue polypeptide: Ribosomal protein L11 methyltransferase (316 aa).

S-adenosyl-L-methionine-binding residues include Thr-157, Gly-178, Asp-200, and Asn-243.

The protein belongs to the methyltransferase superfamily. PrmA family.

The protein localises to the cytoplasm. The catalysed reaction is L-lysyl-[protein] + 3 S-adenosyl-L-methionine = N(6),N(6),N(6)-trimethyl-L-lysyl-[protein] + 3 S-adenosyl-L-homocysteine + 3 H(+). In terms of biological role, methylates ribosomal protein L11. The chain is Ribosomal protein L11 methyltransferase from Streptococcus pneumoniae (strain P1031).